The primary structure comprises 380 residues: Erythronate-4-phosphate dehydrogenase (380 aa).

The substrate site is built by Ser45 and Thr66. Residues Asp146 and Thr174 each contribute to the NAD(+) site. Residue Arg207 is part of the active site. Asp231 lines the NAD(+) pocket. Glu236 is a catalytic residue. The active-site Proton donor is the His253. Residue Gly256 coordinates NAD(+). Residue Tyr257 coordinates substrate.

It belongs to the D-isomer specific 2-hydroxyacid dehydrogenase family. PdxB subfamily. In terms of assembly, homodimer.

The protein resides in the cytoplasm. It catalyses the reaction 4-phospho-D-erythronate + NAD(+) = (R)-3-hydroxy-2-oxo-4-phosphooxybutanoate + NADH + H(+). It participates in cofactor biosynthesis; pyridoxine 5'-phosphate biosynthesis; pyridoxine 5'-phosphate from D-erythrose 4-phosphate: step 2/5. In terms of biological role, catalyzes the oxidation of erythronate-4-phosphate to 3-hydroxy-2-oxo-4-phosphonooxybutanoate. This chain is Erythronate-4-phosphate dehydrogenase, found in Pseudomonas fluorescens (strain Pf0-1).